Reading from the N-terminus, the 234-residue chain is Interleukin-34 (234 aa).

Residues Met-1 to Gly-20 form the signal peptide. N-linked (GlcNAc...) asparagine glycosylation occurs at Asn-99. The interval Pro-215–Pro-234 is disordered. Residues Leu-222 to Pro-234 are compositionally biased toward polar residues.

This sequence belongs to the IL-34 family. In terms of assembly, homodimer. Interacts with CSF1R.

It is found in the secreted. Cytokine that promotes the proliferation, survival and differentiation of monocytes and macrophages. Promotes the release of pro-inflammatory chemokines, and thereby plays an important role in innate immunity and in inflammatory processes. Plays an important role in the regulation of osteoclast proliferation and differentiation, and in the regulation of bone resorption. Signaling via CSF1R and its downstream effectors stimulates phosphorylation of MAPK1/ERK2 AND MAPK3/ERK1. The chain is Interleukin-34 (Il34) from Rattus norvegicus (Rat).